The primary structure comprises 589 residues: Mitogen-activated protein kinase 8 (589 aa).

The disordered stretch occupies residues 18-56; it reads RPSSSSSSSSSNNNNNNHEQPIFNSSSFSSSSNPNHSAN. Low complexity-rich tracts occupy residues 20–34 and 41–56; these read SSSS…NNNN and NSSS…HSAN. Residues 104 to 395 enclose the Protein kinase domain; sequence YQIQEVVGKG…AEDALADPYF (292 aa). Residues 110–118 and Lys133 contribute to the ATP site; that span reads VGKGSYGVV. Residue Asp230 is the Proton acceptor of the active site. Thr266 bears the Phosphothreonine mark. A TXY motif is present at residues 266–268; it reads TDY. Tyr268 is subject to Phosphotyrosine. At Thr271 the chain carries Phosphothreonine. Residues 474–589 form a disordered region; it reads NQGKPGAAGG…TDKVASLHNS (116 aa).

It belongs to the protein kinase superfamily. CMGC Ser/Thr protein kinase family. MAP kinase subfamily. As to quaternary structure, interacts with CAM3, CAM4 and CAM7 in an calcium-dependent manner. In terms of processing, dually phosphorylated on Thr-266 and Tyr-268, which activates the enzyme. Autophosphorylated. In terms of tissue distribution, ubiquitous.

It carries out the reaction L-seryl-[protein] + ATP = O-phospho-L-seryl-[protein] + ADP + H(+). The enzyme catalyses L-threonyl-[protein] + ATP = O-phospho-L-threonyl-[protein] + ADP + H(+). Activated by threonine and tyrosine phosphorylation. Activated by two independent mechanisms, the binding of CAMs in a calcium-dependent manner and the phosphorylation by MAP kinase kinase MKK3. Activated in response to mechanical wounding, hydrogen peroxide and jasmonic acid (JA). Functionally, MKK3-MPK8 and CAMs-MPK8 modules negatively regulates ROS accumulation through controlling expression of the RBOHD gene during wounding. This chain is Mitogen-activated protein kinase 8 (MPK8), found in Arabidopsis thaliana (Mouse-ear cress).